The sequence spans 2067 residues: MAVTSFPADSLASMESVKQTVRSTSTCSAATVLSLQTLFRSAGEMETTLRRTARGTKATATNATASSRAKTTRTKSTSTSTTRTKTPAQDVSTFTSTSASLADTRLSNQEKLVLATEVFNSTLKTLSDAVKTVMSISKEKKDASPTKRGTTTKGRVKTSQPDLTDNENGVSAVAECARLSLSCLRMLRTDAMVDGGLPNLQLEQGACVLAGRLLALGLNDAAYKELRGLKRRIQSYLEELPSGRKRTGRKDAEDGEETAKERMSDLLSFSDIANARSIHGLLVSFQSNALRLIAAEKRPATVQKLVPSLQLTDESSPANVIMASIDSGALTKDKAAVQLQLLSSTVLSLSASGASTGKERLRPSIVLSLQLLALEIRCMSWKLSGHACEDNKEMWDPLARYIGAFAQATKSIEKAEFAVIYKNIVRLQSAFSKTQNCATRSTDNLSVARIATILGQLAQDAGCFDEALQLFTESLNPLSSSQCLGMATVRCKIAALHFQAFKSSVKLPGDVSDAVSQATAALSISLKGSSHDLDELLVQAAKLKKLAMGWFGDLISKGQGSQCENVVFPRICEFLSSFVRFLRRYIGRRPENDELNDREIFQKRIDAAQNIVLAAVDSTIAIGKLSVMSQRPAWEETVSTLLDCQRLLATIEPFDEVDVATADSIDQALVKLSNLFWSRYLKEKEAGKNARELLPLLKQSAYLLSGCSPSQRATGFAPLKYERLAHTYIEGNMVSEAEVAFRQSITDHIAAGALDKIASSTDGCFPHQMNQDPKRSGFTLGRVLSAYLKVKLRNKRSAVNEIFDDETLPSVQRGHVLEWQLGILTEIHGTSNNDNVFRSVFAEVATRLFKVYPAEQHPVRRLRVLLSGLRFALEQPGFLDSSLLQRFADEGRKGLDDDDYQDDDDIKSLAVYLKNSVRLTLGLQQGSLGPEELELIVSTWTSILRFCHDLKSLVACVGNVEYFLLQMKAVVDYTEIHGLWKFQLSTLELVLRVTELHGAGTFSEAIIVLSRLVLQYCRMGFCIKAHSLLSRADGYIANHEVSCLARLSYELARVGFLLETGDNQKAATVLSTARMIYEKHQATEDLDACSVLTKISWERLVADAAFMSSRLSFAQGSIKDALYFAKLSVRLNCRIWAKVEKLAQKKQEKAVVGDSSELEIVVEGMAKLEVSQTSSTYSQGAPFWPHIGSHHSSLLHLANLSAHHGLFQDAIYYGEQALKINKSLNANVRLIASQAHLGSHWILGGHISEGQQLLASAKALSDKLGSSIELVSLRLSLAALHRVEGDYRNEYRTLREAEKLLGGLFESQADSADIPDLEEKMDKLRVRPKSRSTRQPATTATRRTRSATTSARSTPKPPQSVEATNASNTLLQMKSEILLQQAASLRAQREFEAASTLLSDARKFAVTRNSRISVHLGESEHLLADAIRNFANHAVYCVLPESTISLPSLEPKAASESSSKSATRKTRAPTRGTRTKAQAATEDFSVMLSKAGDCLNGIFDTATQLGSTLDSHSASRLMSRISMLSHVTASPNHILWPHSPANMNEVGRIGAFARERAAIRIDKRLADYCDPLLWPRSELESEGVSPDFTKEYVDILPDNWNVLSLSLSADRAEFVVSRLHRGCSPFLLRLPLRRGNSEDEEEQFTFEDGRDEMKELIRLANESAHAAKLQVDRQMKKEWWKNREALDRRMENLLQNIENVWFGGFRGIFSPIPLCEKSLARFASAFENILENHLPSRRKGSRAQGPKLTLHPNVLELFVGVKGLDDQEDPEDTLMDLLYFVVDILQFQGERNAYDEVDFDMMVVETLDAVRAYHEAAKDQATQRPNNTVLVLDKSLHLFPWESLPCLQGLPVCRVPSLECLRDRVLHLRSGKQSALSIDRRNGTYILNPTGDLKTTQETFEKDLSSLKGWTGMVNRQPTEDEFKDSLQSKSLFLYFGHGSGAQYIRGRTVKRLDRCAVAFLMGCSSGTLTEAGEYEPYGTPMNYLQAGSPALVATLWDVTDKDIDRFAKATFEHWGLIGNGHRGNEGIGEAGVALDAAVSQSRGACVLKYLNGAAPVVYGVPGVFLH.

Disordered regions lie at residues 51–91, 140–167, 1316–1363, and 1449–1478; these read RTAR…AQDV, KKDA…TDNE, DLEE…SVEA, and LEPK…TKAQ. A compositionally biased stretch (low complexity) spans 55–86; it reads GTKATATNATASSRAKTTRTKSTSTSTTRTKT. Low complexity-rich tracts occupy residues 1333–1354 and 1449–1461; these read TRQP…ARST and LEPK…SSKS. Residues 1880–1975 enclose the Peptidase C50 domain; it reads RRNGTYILNP…SGTLTEAGEY (96 aa). Residue cysteine 1964 is part of the active site.

It is found in the nucleus. It catalyses the reaction All bonds known to be hydrolyzed by this endopeptidase have arginine in P1 and an acidic residue in P4. P6 is often occupied by an acidic residue or by a hydroxy-amino-acid residue, the phosphorylation of which enhances cleavage.. Required for nuclear division. Could function in the mitotic spindle. This is Separin (bimB) from Emericella nidulans (strain FGSC A4 / ATCC 38163 / CBS 112.46 / NRRL 194 / M139) (Aspergillus nidulans).